A 7059-amino-acid chain; its full sequence is Replicase polyprotein 1ab (7059 aa).

The region spanning 54–196 is the CoV Nsp1 globular domain; the sequence is PENHVMVDCR…PWVMYLRKCG (143 aa). Residues 216 to 246 form the BetaCoV Nsp1 C-terminal domain; that stretch reads FKVEDAYDLVHDEPKGKFSKKAYALIRGYRG. Residues 250 to 519 form the CoV Nsp2 N-terminal domain; sequence LLYVDQYGCD…LICKALYLDY (270 aa). Zn(2+) contacts are provided by Cys392, Cys397, Cys413, and Cys416. The segment at 392 to 416 is C4; the sequence is CEQDLCDFKGWVPGNMIDGFACTTC. One can recognise a CoV Nsp2 middle domain in the interval 524-713; that stretch reads CGNLHQRELL…AQAFRSGAKV (190 aa). In terms of domain architecture, CoV Nsp2 C-terminal spans 733–851; it reads RRRICLSGSK…LDQAWRVPCA (119 aa). Positions 853-966 constitute a Ubiquitin-like 1 domain; sequence RCVTFKEQPT…LYCAFTAPED (114 aa). Residues 972–986 show a composition bias toward acidic residues; it reads ESGVEEDDVEGEETD. Positions 972–1000 are disordered; it reads ESGVEEDDVEGEETDLTVTSAGEPCVASE. The Peptidase C16 1 domain maps to 1036 to 1274; sequence DLESVIQDYE…IAQLYGSCIT (239 aa). Residue Cys1074 is the For PL1-PRO activity of the active site. Residues Cys1151, Cys1154, Cys1177, and Cys1179 each contribute to the Zn(2+) site. The segment at 1151–1179 adopts a C4-type 1 zinc-finger fold; the sequence is CIKCDLALKLKGLDAMFFYGDVVSHVCKC. Active-site for PL1-PRO activity residues include His1225 and Asp1236. A Macro domain is found at 1275 to 1435; that stretch reads PNVCFVKGDI…LISKCQITAV (161 aa). A DPUP domain is found at 1491-1563; sequence DDARTFVQSN…VAQIKALFLD (73 aa). One can recognise a Ubiquitin-like 2 domain in the interval 1562 to 1617; the sequence is LDKVDILLTVDGVNFTNRFVPVGESFGKSLGNVFCDGVNVTKHKCDINYKGKVFFQ. In terms of domain architecture, Peptidase C16 2 spans 1631–1892; the sequence is SSFNFDQKEL…KIEYKPDLSQ (262 aa). Cys1671 (for PL2-PRO activity) is an active-site residue. Zn(2+)-binding residues include Cys1749, Cys1751, Cys1783, and Cys1785. The segment at 1749-1785 adopts a C4-type 2 zinc-finger fold; sequence CKCGVKQEQRTGVDAVMHFGTLSREDLEIGYTVDCSC. Active-site for PL2-PRO activity residues include His1828 and Asp1842. The Nucleic acid-binding domain occupies 1906 to 2007; the sequence is IKAQFKTFEK…TYFNRPLLVD (102 aa). Residues 2020–2169 form the G2M domain; it reads DDGGDISESD…ADNKVIYTTE (150 aa). 3 helical membrane-spanning segments follow: residues 2138 to 2158, 2199 to 2219, and 2221 to 2241; these read ISACFNFIKWLFVLLFGWIKI, ACIIATIFLLWFNFIYANVIF, and DFYLPKIGFLPTFVGKIVQWI. The segment at 2138-2385 is HD1; it reads ISACFNFIKW…ASFIKLFSLF (248 aa). Positions 2235–2296 constitute a 3Ecto domain; the sequence is GKIVQWIKNT…AIDVVQYEAD (62 aa). Intrachain disulfides connect Cys2251–Cys2275 and Cys2266–Cys2272. Helical transmembrane passes span 2313–2333, 2343–2363, and 2365–2385; these read LIVSYALYTAWFYPLFALISI, LLMLSTLHWSVRLLVSLANML, and AHVFMRFYIIIASFIKLFSLF. Residues 2383-2473 form a Y1 region; the sequence is SLFRHVAYGC…ELKRPIQPTD (91 aa). Residues 2383–2750 form the CoV Nsp3 Y domain; that stretch reads SLFRHVAYGC…LTTPFSLKGG (368 aa). 8 residues coordinate Zn(2+): His2387, Cys2392, Cys2397, Cys2400, Cys2433, His2436, Cys2440, and Cys2443. Positions 2387-2400 are ZF1; the sequence is HVAYGCSKSGCLFC. Positions 2433-2443 are ZF2; that stretch reads CSKHQWNCIDC. The interval 2474–2566 is Y2; sequence VAYHTVTDVK…MVDKILITTA (93 aa). The interval 2474–2750 is coV-Y; the sequence is VAYHTVTDVK…LTTPFSLKGG (277 aa). The Y3 stretch occupies residues 2567 to 2649; it reads NTGTSVTETM…DSVMSAVSAG (83 aa). The interval 2650–2750 is Y4; the sequence is LELTDESCNN…LTTPFSLKGG (101 aa). A run of 7 helical transmembrane segments spans residues 2752–2772, 2824–2844, 3009–3029, 3031–3051, 3063–3083, 3090–3110, and 3115–3135; these read VFSYFVYVCFVLSLVCFIGLW, STFGLSYYSNSMACPIVVAVV, VFDLIYQLFKGLAQPVDFLAL, ASSIAGAILAVIVVLGFYYLI, IVFVNVIVWCVNFMMLFVFQV, VYAICYFYATLYFPSEISVIM, and LVMYGTIMPLWFCLLYISVVV. The interval 2752–3135 is HD2; the sequence is VFSYFVYVCF…FCLLYISVVV (384 aa). In terms of domain architecture, Nsp4C spans 3149–3246; that stretch reads LGTSVRSDGT…TASVSTSFLQ (98 aa). Residues 3247–3549 form the Peptidase C30 domain; sequence SGIVKMVNPT…YQQLAGIKLQ (303 aa). Catalysis depends on for 3CL-PRO activity residues His3287 and Cys3391. Residues 3319–3775 are HD3; sequence LSLTVMSYQM…IISCYWGLFS (457 aa). Helical transmembrane passes span 3558–3578, 3588–3608, 3615–3635, 3657–3677, 3684–3704, 3711–3731, and 3755–3775; these read GIVCWIMASTFLFSCIITAFV, TNMLSITFCALCVISLAMLLV, LTMYIIPVLFTLLYNNYLVVY, TYTDEVIYGMLLLIGMVFVTL, LFSFIMFVGRVISVVSLWYMG, ILLMLASLFGTYTWTTALSMA, and IVLVCYLFIGYIISCYWGLFS. One can recognise a RdRp Nsp7 cofactor domain in the interval 3837 to 3925; it reads SKLTDVKCAN…DYAKDNTVLQ (89 aa). A RdRp Nsp8 cofactor domain is found at 3926-4122; it reads ALQSEFVNMA…HNEVSATVLQ (197 aa). The region spanning 4123–4232 is the Nsp9 ssRNA-binding domain; that stretch reads NNELMPAKLK…GTISSTVRLQ (110 aa). The 138-residue stretch at 4233 to 4370 folds into the ExoN/MTase coactivator domain; it reads AGTATEYASN…CVSTDTTVQS (138 aa). Zn(2+) contacts are provided by Cys4306, Cys4309, His4315, Cys4322, Cys4348, Cys4351, Cys4359, and Cys4361. Zinc fingers lie at residues 4306–4322 and 4348–4361; these read CIYCRARVEHPDVDGLC and CQVCGFWRDGSCSC. In terms of domain architecture, NiRAN spans 4375 to 4630; the sequence is FLNRVRGTSV…DCELYVNNAY (256 aa). 2 residues coordinate Mn(2+): Asn4578 and Asp4587. The Nsp12 Interface domain maps to 4631-4729; the sequence is RLFDLVQYDF…MNMDVDTHRY (99 aa). The Zn(2+) site is built by His4660, Cys4666, Cys4671, Cys4675, and Cys4852. Residues 4730–5297 enclose the Nsp12 RNA-dependent RNA polymerase domain; sequence RLSLKDLLLY…NMYLRSAVMQ (568 aa). Positions 4732–4946 are rdRp Fingers N-ter; sequence SLKDLLLYAA…HQKCLKSIAA (215 aa). Residues 4947 to 4985 form a rdRp Palm N-ter region; the sequence is TRGVPVVIGTTKFYGGWDDMLRRLIKDVDNPVLMGWDYP. A RdRp catalytic domain is found at 4977–5139; the sequence is PVLMGWDYPK…CYNSDYASKG (163 aa). The tract at residues 4986–5044 is rdRp Fingers C-ter; the sequence is KCDRAMPNILRIVSSLVLARKHEACCSQSDRFYRLANECAQVLSEIVMCGGCYYVKPGG. His5007, Cys5010, and Cys5011 together coordinate Zn(2+). Residues 5045–5180 form a rdRp Palm C-ter region; that stretch reads TSSGDATTAF…NNGPHEFCSQ (136 aa). Catalysis depends on residues Ser5124, Asp5125, and Asp5126. Positions 5181–5297 are rdRp Thumb; it reads HTMLVKMDGD…NMYLRSAVMQ (117 aa). The 113-residue stretch at 5298-5410 folds into the CV ZBD domain; it reads SVGACVVCSS…DDFNRIASCK (113 aa). Residues Cys5302, Cys5305, Cys5313, Cys5316, Cys5323, Cys5326, His5330, His5336, Cys5347, Cys5352, Cys5369, and His5372 each coordinate Zn(2+). One can recognise a (+)RNA virus helicase ATP-binding domain in the interval 5553–5734; that stretch reads SVLETFQNNV…MCCLGPDIFL (182 aa). 5578–5585 lines the ATP pocket; sequence GPPGTGKS. A (+)RNA virus helicase C-terminal domain is found at 5735 to 5904; that stretch reads GTCYRCPKEI…VETRVQCSTN (170 aa). The region spanning 5971-6186 is the ExoN domain; the sequence is LFITKEEAVK…RCLAVYDCFC (216 aa). Residues Asp5989, Glu5991, and Glu6090 contribute to the active site. Residues His6156, Cys6160, and His6163 each contribute to the Zn(2+) site. Active-site residues include His6167 and Asp6172. Cys6178 provides a ligand contact to Zn(2+). One can recognise an N7-MTase domain in the interval 6195-6421; that stretch reads YPIISNELSI…NLWNTFTKLQ (227 aa). Residue 6230–6236 coordinates S-adenosyl-L-methionine; it reads DIGNPKA. A gpppA-binding region spans residues 6308-6322; sequence CNGGSLYVNKHAFHT. Cys6346, Cys6367, Cys6378, and His6381 together coordinate Zn(2+). The 61-residue stretch at 6422-6482 folds into the Nsp15 N-terminal oligomerization domain; it reads SLENVVYNLV…NVAVELFAKR (61 aa). The AV-Nsp11N/CoV-Nsp15M domain occupies 6483-6603; that stretch reads SIRHHPELKL…FAVRKEGQDV (121 aa). Residues 6653–6792 enclose the NendoU domain; sequence TCRTDMEKDF…NDEKVMTFYP (140 aa). Catalysis depends on residues His6683, His6698, Lys6738, Lys6841, Asp6935, Lys6971, and Glu7004. The Nidovirus-type SAM-dependent 2'-O-MTase domain occupies 6797 to 7059; sequence ASDWKPGYSM…NSRLSWLVMP (263 aa).

Belongs to the coronaviruses polyprotein 1ab family. Interacts with host PHB and PHB2. In terms of assembly, interacts with papain-like protease nsp3 and non-structural protein 6. As to quaternary structure, monomer. Homodimer. Only the homodimer shows catalytic activity. Interacts with nsp8 and nsp12 to form the replication-transcription complex (RTC): nsp12, nsp7, two subunits of nsp8, and up to two subunits of nsp13. In terms of assembly, interacts with nsp7, nsp13 and nsp12 to form the replication-transcription complex (RTC): nsp12, nsp7, two subunits of nsp8, and up to two subunits of nsp13. As to quaternary structure, interacts with nsp12. Interacts with proofreading exoribonuclease nsp14 and 2'-O-methyltransferase nsp16; these interactions enhance nsp14 and nsp16 enzymatic activities. In terms of assembly, interacts with nsp7 and nsp8 to form the replication-transcription complex (RTC): nsp12, nsp7, two subunits of nsp8, and up to two subunits of nsp13. Interacts with nsp9. As to quaternary structure, interacts with nsp8 to form the replication-transcription complex (RTC): nsp12, nsp7, two subunits of nsp8, and up to two subunits of nsp13. Mn(2+) is required as a cofactor. Requires Mg(2+) as cofactor. In terms of processing, specific enzymatic cleavages in vivo by its own proteases yield mature proteins. 3CL-PRO and PL-PRO proteinases are autocatalytically processed.

The protein localises to the host membrane. It localises to the host cytoplasm. Its subcellular location is the host perinuclear region. It is found in the host endoplasmic reticulum-Golgi intermediate compartment. The enzyme catalyses RNA(n) + a ribonucleoside 5'-triphosphate = RNA(n+1) + diphosphate. The catalysed reaction is ATP + H2O = ADP + phosphate + H(+). It catalyses the reaction Thiol-dependent hydrolysis of ester, thioester, amide, peptide and isopeptide bonds formed by the C-terminal Gly of ubiquitin (a 76-residue protein attached to proteins as an intracellular targeting signal).. It carries out the reaction a 5'-end (N(7)-methyl 5'-triphosphoguanosine)-ribonucleoside in mRNA + S-adenosyl-L-methionine = a 5'-end (N(7)-methyl 5'-triphosphoguanosine)-(2'-O-methyl-ribonucleoside) in mRNA + S-adenosyl-L-homocysteine + H(+). The enzyme catalyses uridylyl-uridylyl-ribonucleotide-RNA = a 3'-end uridylyl-2',3'-cyclophospho-uridine-RNA + a 5'-end dephospho-ribonucleoside-RNA. The catalysed reaction is a 5'-end diphospho-ribonucleoside in mRNA + GTP + H(+) = a 5'-end (5'-triphosphoguanosine)-ribonucleoside in mRNA + diphosphate. It catalyses the reaction a 5'-end (5'-triphosphoguanosine)-ribonucleoside in mRNA + S-adenosyl-L-methionine = a 5'-end (N(7)-methyl 5'-triphosphoguanosine)-ribonucleoside in mRNA + S-adenosyl-L-homocysteine. The replicase polyprotein of coronaviruses is a multifunctional protein: it contains the activities necessary for the transcription of negative stranded RNA, leader RNA, subgenomic mRNAs and progeny virion RNA as well as proteinases responsible for the cleavage of the polyprotein into functional products. Functionally, inhibits host translation by interacting with the 40S ribosomal subunit. The nsp1-40S ribosome complex further induces an endonucleolytic cleavage near the 5'UTR of host mRNAs, targeting them for degradation. Viral mRNAs are not susceptible to nsp1-mediated endonucleolytic RNA cleavage thanks to the presence of a 5'-end leader sequence and are therefore protected from degradation. By suppressing host gene expression, nsp1 facilitates efficient viral gene expression in infected cells and evasion from host immune response. Its function is as follows. May play a role in the modulation of host cell survival signaling pathway by interacting with host PHB and PHB2. Indeed, these two proteins play a role in maintaining the functional integrity of the mitochondria and protecting cells from various stresses. In terms of biological role, responsible for the cleavages located at the N-terminus of the replicase polyprotein. In addition, PL-PRO possesses a deubiquitinating/deISGylating activity and processes both 'Lys-48'- and 'Lys-63'-linked polyubiquitin chains from cellular substrates. Participates together with nsp4 in the assembly of virally-induced cytoplasmic double-membrane vesicles necessary for viral replication. Antagonizes innate immune induction of type I interferon by blocking the phosphorylation, dimerization and subsequent nuclear translocation of host IRF3. Also prevents host NF-kappa-B signaling. Participates in the assembly of virally-induced cytoplasmic double-membrane vesicles necessary for viral replication. Functionally, cleaves the C-terminus of replicase polyprotein at 11 sites. Recognizes substrates containing the core sequence [ILMVF]-Q-|-[SGACN]. Also able to bind an ADP-ribose-1''-phosphate (ADRP). Its function is as follows. Plays a role in the initial induction of autophagosomes from host endoplasmic reticulum. Later, limits the expansion of these phagosomes that are no longer able to deliver viral components to lysosomes. In terms of biological role, forms a hexadecamer with nsp8 (8 subunits of each) that may participate in viral replication by acting as a primase. Alternatively, may synthesize substantially longer products than oligonucleotide primers. Forms a hexadecamer with nsp7 (8 subunits of each) that may participate in viral replication by acting as a primase. Alternatively, may synthesize substantially longer products than oligonucleotide primers. Functionally, forms a primer, NSP9-pU, which is utilized by the polymerase for the initiation of RNA chains. Interacts with ribosome signal recognition particle RNA (SRP). Together with NSP8, suppress protein integration into the cell membrane, thereby disrupting host immune defenses. Its function is as follows. Plays a pivotal role in viral transcription by stimulating both nsp14 3'-5' exoribonuclease and nsp16 2'-O-methyltransferase activities. Therefore plays an essential role in viral mRNAs cap methylation. In terms of biological role, RNA-directed RNA polymerase that catalyzes the transcription of viral genomic and subgenomic RNAs. Acts in complex with nsp7 and nsp8 to transcribe both the minus and positive strands of genomic RNA. The kinase-like NiRAN domain of NSP12 attaches one or more nucleotides to the amino terminus of NSP9, forming a covalent RNA-protein intermediate that serves as transcription/replication primer. Subgenomic RNAs (sgRNAs) are formed by discontinuous transcription: The polymerase has the ability to pause at transcription-regulating sequences (TRS) and jump to the leader TRS, resulting in a major deletion. This creates a series of subgenomic RNAs that are replicated, transcribed and translated. In addition, Nsp12 is a subunit of the viral RNA capping enzyme that catalyzes the RNA guanylyltransferase reaction for genomic and sub-genomic RNAs. Subsequently, the NiRAN domain transfers RNA to GDP, and forms the core cap structure GpppA-RNA. Multi-functional protein with a zinc-binding domain in N-terminus displaying RNA and DNA duplex-unwinding activities with 5' to 3' polarity. Activity of helicase is dependent on magnesium. Functionally, plays a role in viral RNA synthesis through two distinct activities. The N7-guanine methyltransferase activity plays a role in the formation of the cap structure GpppA-RNA. The proofreading exoribonuclease reduces the sensitivity of the virus to RNA mutagens during replication. This activity acts on both ssRNA and dsRNA in a 3'-5' direction. Its function is as follows. Plays a role in viral transcription/replication and prevents the simultaneous activation of host cell dsRNA sensors, such as MDA5/IFIH1, OAS, and PKR. Acts by degrading the 5'-polyuridines generated during replication of the poly(A) region of viral genomic and subgenomic RNAs. Catalyzes a two-step reaction in which a 2'3'-cyclic phosphate (2'3'-cP) is first generated by 2'-O transesterification, which is then hydrolyzed to a 3'-phosphate (3'-P). If not degraded, poly(U) RNA would hybridize with poly(A) RNA tails and activate host dsRNA sensors. In terms of biological role, methyltransferase that mediates mRNA cap 2'-O-ribose methylation to the 5'-cap structure of viral mRNAs. N7-methyl guanosine cap is a prerequisite for binding of nsp16. Therefore plays an essential role in viral mRNAs cap methylation which is essential to evade immune system. In Bos taurus (Bovine), this protein is Replicase polyprotein 1ab (rep).